The following is a 1383-amino-acid chain: DNA-directed RNA polymerase subunit beta (1383 aa).

It belongs to the RNA polymerase beta chain family. The RNAP catalytic core consists of 2 alpha, 1 beta, 1 beta' and 1 omega subunit. When a sigma factor is associated with the core the holoenzyme is formed, which can initiate transcription.

The catalysed reaction is RNA(n) + a ribonucleoside 5'-triphosphate = RNA(n+1) + diphosphate. Its function is as follows. DNA-dependent RNA polymerase catalyzes the transcription of DNA into RNA using the four ribonucleoside triphosphates as substrates. The protein is DNA-directed RNA polymerase subunit beta of Xanthomonas euvesicatoria pv. vesicatoria (strain 85-10) (Xanthomonas campestris pv. vesicatoria).